Here is a 212-residue protein sequence, read N- to C-terminus: Kynurenine formamidase (212 aa).

Residue tryptophan 18 participates in substrate binding. The Zn(2+) site is built by histidine 48, histidine 52, and aspartate 54. Residue histidine 58 is the Proton donor/acceptor of the active site. Positions 160 and 172 each coordinate Zn(2+).

It belongs to the Cyclase 1 superfamily. KynB family. Homodimer. Requires Zn(2+) as cofactor.

The catalysed reaction is N-formyl-L-kynurenine + H2O = L-kynurenine + formate + H(+). The protein operates within amino-acid degradation; L-tryptophan degradation via kynurenine pathway; L-kynurenine from L-tryptophan: step 2/2. Functionally, catalyzes the hydrolysis of N-formyl-L-kynurenine to L-kynurenine, the second step in the kynurenine pathway of tryptophan degradation. The polypeptide is Kynurenine formamidase (Paraburkholderia phytofirmans (strain DSM 17436 / LMG 22146 / PsJN) (Burkholderia phytofirmans)).